Here is a 900-residue protein sequence, read N- to C-terminus: DNA mismatch repair protein MutS (900 aa).

Residues 1–88 (MPGPSDDPTE…PAWAHHSQVD (88 aa)) form a disordered region. The segment covering 56–68 (APADHNAADHDSN) has biased composition (basic and acidic residues). Position 714-721 (714-721 (GPNASGKS)) interacts with ATP.

The protein belongs to the DNA mismatch repair MutS family.

This protein is involved in the repair of mismatches in DNA. It is possible that it carries out the mismatch recognition step. This protein has a weak ATPase activity. The polypeptide is DNA mismatch repair protein MutS (Parasynechococcus marenigrum (strain WH8102)).